An 85-amino-acid polypeptide reads, in one-letter code: Conotoxin MaIr94 (85 aa).

The signal sequence occupies residues 1-22 (MKLTCVLIITVLFLTACQLTAA). A propeptide spanning residues 23-49 (GNSRDKQEDPVVRSSGEVQRSEDIKLA) is cleaved from the precursor. 3 disulfides stabilise this stretch: Cys-52–Cys-69, Cys-59–Cys-73, and Cys-68–Cys-84.

This sequence belongs to the conotoxin O1 superfamily. Expressed by the venom duct.

The protein resides in the secreted. Produces no obvious effect on ionic currents when tested on the mouse dorsal rooted ganglia (DRG). This is Conotoxin MaIr94 from Conus marmoreus (Marble cone).